The sequence spans 241 residues: ATP-dependent Clp protease ATP-binding subunit CLPT2, chloroplastic (241 aa).

Residues 1-75 constitute a chloroplast transit peptide; sequence MAAHSSCNFA…PRRIHKSAIS (75 aa). The region spanning 91-237 is the Clp R domain; that stretch reads KPKWSWRAIK…ELESFASESG (147 aa). Repeat regions lie at residues 94-159 and 171-237; these read WSWR…LGKA and LTED…SESG.

It belongs to the ClpA/ClpB family. As to quaternary structure, monomer and homodimer. The dimers monomerize before association to the P-ring. Component of the chloroplastic Clp protease core complex which consist of at least 16 proteins: CLPP4 (3 copies), CLPP5 (3 copies), CLPR4 (2 copies), ClpP1 (1 copy), CLPP6 (1 copy), CLPR2 (1 copy), CLPT1 (1 copy), CLPT2 (1 copy) and 3 copies of CLPP3 and/or CLPR1 and/or CLPR3. Interacts with AHK2. Interacts with CPN21. No interactions with CLPS1.

The protein resides in the plastid. The protein localises to the chloroplast. Functionally, accessory protein regulating the assembly of the plastidial Clp protease system. CLPT1 first binds to the heptameric P-ring containing the CLP3-6 subunits followed by CLPT2, and only then does the P-ring combine with the R-ring composed of the clpP1 and CLPR1-4 subunits. Once the core complex is fully assembled, it then associates to the CLPC chaperone partner to form the functional protease. CLPT2 and CLPT1 are partially redundant. This Arabidopsis thaliana (Mouse-ear cress) protein is ATP-dependent Clp protease ATP-binding subunit CLPT2, chloroplastic.